Reading from the N-terminus, the 518-residue chain is MLGQVLLTVESYQWVSTPQALVAVAVLLSLIAYRLRGRQSELQVYNPKKWWELTTMRARQDFDTYGPSWIEAWFSKNDKPLRFIVDSGYCTILPSSMADEFRKIKDMCMYKFLADDFHSHLPGFDGFKEICQDAHLVNKVVLNQLQTQAPKYTKPLATLADATIAKLFGKSEEWQTAPVYSNGLDLVTRTVTLIMVGDKICHNEEWLDIAKNHAVSVAVQARQLRVWPMLLRPLAHWFQPQGRKLRDQVRRARKIIDPEIQRRRAEKAACVAKGVQPPQYVDTMQWFEDTADGRWYDVAGAQLAMDFAGIYASTDLFVGALVDIARHPDLIQPLRQEIRTVIGEGGWTPASLFKLKLLDSCMKETQRIKPVECATMRSTALRDITLSNGLFIPKGELAAVAADRMNNPDVWENPENYDPYRFMRMREDPDKAFTAQLENTNGDHIGFGWNPRACPGRFFASKEIKILLAHILIQYDVKPVPGDDDKYYRHAFSVRMHPTTKLMVRRRNEDIPLPHDRC.

At 1–31 (MLGQVLLTVESYQWVSTPQALVAVAVLLSLI) the chain is on the cytoplasmic side. A helical; Signal-anchor for type II membrane protein membrane pass occupies residues 32 to 48 (AYRLRGRQSELQVYNPK). Residues 49–518 (KWWELTTMRA…EDIPLPHDRC (470 aa)) are Lumenal-facing. Cys-454 lines the heme pocket.

Belongs to the cytochrome P450 family. Heme serves as cofactor.

It localises to the endoplasmic reticulum membrane. It carries out the reaction dihydro-ML-236C carboxylate + reduced [NADPH--hemoprotein reductase] + O2 = ML-236C carboxylate + oxidized [NADPH--hemoprotein reductase] + 2 H2O + H(+). It catalyses the reaction ML-236C carboxylate + reduced [NADPH--hemoprotein reductase] + O2 = ML-236A carboxylate + oxidized [NADPH--hemoprotein reductase] + H2O + H(+). Its pathway is polyketide biosynthesis. Functionally, dihydro-ML-236C carboxylate monooxygenase; part of the gene cluster that mediates the biosynthesis of compactin, also known as mevastatin or ML-236B, and which acts as a potent competitive inhibitor of HMG-CoA reductase. Compactin biosynthesis is performed in two stages. The first stage is catalyzed by the nonaketide synthase mlcA, which belongs to type I polyketide synthases and catalyzes the iterative nine-step formation of the polyketide. This PKS stage is completed by the action of dehydrogenase mlcG, which catalyzes the NADPH-dependent reduction of the unsaturated tetra-, penta- and heptaketide intermediates that arise during the mlcA-mediated biosynthesis of the nonaketide chain and leads to dihydro-ML-236C carboxylate. Covalently bound dihydro-ML-236C carboxylate is released from mlcA by the mlcF esterase. Conversion of dihydro-ML-236C carboxylate into ML-236A carboxylate is subsequently performed with the participation of molecular oxygen and P450 monoogygenase mlcC. Finally, mlcH performs the conversion of ML-236A carboxylate to ML-236B/compactin carboxylate through the addition of the side-chain diketide moiety produced by the diketide synthase mlcB. The polypeptide is Dihydro-ML-236C monooxygenase mlcC (Penicillium citrinum).